We begin with the raw amino-acid sequence, 96 residues long: Putative pterin-4-alpha-carbinolamine dehydratase (96 aa).

This sequence belongs to the pterin-4-alpha-carbinolamine dehydratase family.

It carries out the reaction (4aS,6R)-4a-hydroxy-L-erythro-5,6,7,8-tetrahydrobiopterin = (6R)-L-erythro-6,7-dihydrobiopterin + H2O. This chain is Putative pterin-4-alpha-carbinolamine dehydratase, found in Rhodospirillum rubrum (strain ATCC 11170 / ATH 1.1.1 / DSM 467 / LMG 4362 / NCIMB 8255 / S1).